The following is a 156-amino-acid chain: SsrA-binding protein (156 aa).

This sequence belongs to the SmpB family.

It is found in the cytoplasm. In terms of biological role, required for rescue of stalled ribosomes mediated by trans-translation. Binds to transfer-messenger RNA (tmRNA), required for stable association of tmRNA with ribosomes. tmRNA and SmpB together mimic tRNA shape, replacing the anticodon stem-loop with SmpB. tmRNA is encoded by the ssrA gene; the 2 termini fold to resemble tRNA(Ala) and it encodes a 'tag peptide', a short internal open reading frame. During trans-translation Ala-aminoacylated tmRNA acts like a tRNA, entering the A-site of stalled ribosomes, displacing the stalled mRNA. The ribosome then switches to translate the ORF on the tmRNA; the nascent peptide is terminated with the 'tag peptide' encoded by the tmRNA and targeted for degradation. The ribosome is freed to recommence translation, which seems to be the essential function of trans-translation. In Staphylococcus epidermidis (strain ATCC 35984 / DSM 28319 / BCRC 17069 / CCUG 31568 / BM 3577 / RP62A), this protein is SsrA-binding protein.